The following is a 327-amino-acid chain: uncharacterized protein (327 aa).

An N-terminal signal peptide occupies residues 1–23; sequence MGGGRLPPLWLPLLIAWSEWGNC. 2 N-linked (GlcNAc...) asparagine; by host glycosylation sites follow: Asn144 and Asn239. The tract at residues 298–327 is disordered; that stretch reads EESEAAEETAAGEASAVAAAAVSEEEQRRE. Low complexity predominate over residues 305 to 319; that stretch reads ETAAGEASAVAAAAV.

This is an uncharacterized protein from Human cytomegalovirus (strain AD169) (HHV-5).